The following is a 237-amino-acid chain: Peroxisomal membrane protein 11-1 (237 aa).

Over 1-92 the chain is Cytoplasmic; the sequence is MSTLDATRAE…TLVLLGKSKN (92 aa). Residues 93 to 113 form a helical membrane-spanning segment; that stretch reads ALLSTFLFLDQFVWLGRTGIY. At 114 to 204 the chain is on the lumenal side; the sequence is KNKERTDRIV…VGLLQLSPKK (91 aa). A helical membrane pass occupies residues 205 to 223; that stretch reads ITPRVTGAFGFVTSLISCY. Topologically, residues 224-237 are cytoplasmic; that stretch reads QQLPSRAPAIKVKA.

It belongs to the peroxin-11 family. In terms of tissue distribution, expressed in seedlings, leaf sheaths, flag leaf, panicles and spikelets.

The protein localises to the peroxisome membrane. Its function is as follows. Involved in peroxisomal proliferation. This chain is Peroxisomal membrane protein 11-1 (PEX11-1), found in Oryza sativa subsp. japonica (Rice).